A 194-amino-acid polypeptide reads, in one-letter code: 3-isopropylmalate dehydratase small subunit (194 aa).

This sequence belongs to the LeuD family. LeuD type 1 subfamily. As to quaternary structure, heterodimer of LeuC and LeuD.

It catalyses the reaction (2R,3S)-3-isopropylmalate = (2S)-2-isopropylmalate. It participates in amino-acid biosynthesis; L-leucine biosynthesis; L-leucine from 3-methyl-2-oxobutanoate: step 2/4. In terms of biological role, catalyzes the isomerization between 2-isopropylmalate and 3-isopropylmalate, via the formation of 2-isopropylmaleate. The polypeptide is 3-isopropylmalate dehydratase small subunit (Halalkalibacterium halodurans (strain ATCC BAA-125 / DSM 18197 / FERM 7344 / JCM 9153 / C-125) (Bacillus halodurans)).